Consider the following 71-residue polypeptide: SPbeta prophage-derived uncharacterized protein YorP (71 aa).

The polypeptide is SPbeta prophage-derived uncharacterized protein YorP (yorP) (Bacillus subtilis (strain 168)).